A 146-amino-acid polypeptide reads, in one-letter code: Superoxide dismutase [Mn] 2 (146 aa).

His-42, Asp-126, and His-130 together coordinate Mn(2+).

Belongs to the iron/manganese superoxide dismutase family. The cofactor is Mn(2+).

The enzyme catalyses 2 superoxide + 2 H(+) = H2O2 + O2. Destroys superoxide anion radicals which are normally produced within the cells and which are toxic to biological systems. The chain is Superoxide dismutase [Mn] 2 (sod2) from Haloferax mediterranei (Halobacterium mediterranei).